The chain runs to 677 residues: WD and tetratricopeptide repeats protein 1 (677 aa).

5 WD repeats span residues 45–84 (GHSGCVNCLEWNEKGDLLASGSDDQHTIVWDPLHHKKLLS), 88–129 (GHTA…TIHM), 132–172 (DHTN…KHSE), 182–222 (GQLV…NHRK), and 265–305 (RLRV…RPYT). Residue serine 353 is modified to Phosphoserine. TPR repeat units follow at residues 362–395 (LERVKQQANEAFACQQWTQAIQLYSKAVQRAPHN) and 397–432 (MLYGNRAAAYMKRKWDGDHYDALRDCLKAISLNPCH). Residues 487–509 (NDGEEKKGPGGGAPVRLRSTSRK) are disordered. The residue at position 511 (serine 511) is a Phosphoserine. WD repeat units lie at residues 535-575 (NTTT…LVRV) and 578-617 (GDESIVNCLQPHPSYCFLATSGIDPVVRLWNPRPESEDLT). A disordered region spans residues 655 to 677 (SSGGAGASDDEDSSEGQVQCRPS).

It participates in protein modification; protein ubiquitination. May function as a substrate receptor for CUL4-DDB1 E3 ubiquitin-protein ligase complex. The chain is WD and tetratricopeptide repeats protein 1 (WDTC1) from Homo sapiens (Human).